The chain runs to 242 residues: Phosphoribosylaminoimidazole-succinocarboxamide synthase (242 aa).

This sequence belongs to the SAICAR synthetase family.

The enzyme catalyses 5-amino-1-(5-phospho-D-ribosyl)imidazole-4-carboxylate + L-aspartate + ATP = (2S)-2-[5-amino-1-(5-phospho-beta-D-ribosyl)imidazole-4-carboxamido]succinate + ADP + phosphate + 2 H(+). The protein operates within purine metabolism; IMP biosynthesis via de novo pathway; 5-amino-1-(5-phospho-D-ribosyl)imidazole-4-carboxamide from 5-amino-1-(5-phospho-D-ribosyl)imidazole-4-carboxylate: step 1/2. This is Phosphoribosylaminoimidazole-succinocarboxamide synthase (purC) from Methanocaldococcus jannaschii (strain ATCC 43067 / DSM 2661 / JAL-1 / JCM 10045 / NBRC 100440) (Methanococcus jannaschii).